The primary structure comprises 368 residues: Histidinol dehydrogenase (368 aa).

Residues threonine 197, glutamine 218, and histidine 221 each contribute to the substrate site. The Zn(2+) site is built by glutamine 218 and histidine 221. Residues glutamate 276 and histidine 277 each act as proton acceptor in the active site. Substrate is bound by residues histidine 277, aspartate 306, glutamate 358, and histidine 363. Aspartate 306 serves as a coordination point for Zn(2+). Residue histidine 363 participates in Zn(2+) binding.

This sequence belongs to the histidinol dehydrogenase family. The cofactor is Zn(2+).

The catalysed reaction is L-histidinol + 2 NAD(+) + H2O = L-histidine + 2 NADH + 3 H(+). It functions in the pathway amino-acid biosynthesis; L-histidine biosynthesis; L-histidine from 5-phospho-alpha-D-ribose 1-diphosphate: step 9/9. Functionally, catalyzes the sequential NAD-dependent oxidations of L-histidinol to L-histidinaldehyde and then to L-histidine. The sequence is that of Histidinol dehydrogenase from Pyrobaculum aerophilum (strain ATCC 51768 / DSM 7523 / JCM 9630 / CIP 104966 / NBRC 100827 / IM2).